A 376-amino-acid chain; its full sequence is 28S rRNA (uridine-N(3))-methyltransferase (376 aa).

2 disordered regions span residues 1 to 33 and 49 to 71; these read MAERGRKRPCGPGEHGQRIEWRKWKQQKKEEKK and AQEEQAKRLEEEEAAAEKEDRGR. The span at 15 to 33 shows a compositional bias: basic and acidic residues; it reads HGQRIEWRKWKQQKKEEKK. Positions 289, 292, 312, 341, and 342 each coordinate S-adenosyl-L-homocysteine. The S-adenosyl-L-methionine site is built by Arg292, Gly312, Asn341, and Thr342.

It belongs to the class IV-like SAM-binding methyltransferase superfamily. As to quaternary structure, interacts with INCA1.

It localises to the cytoplasm. It is found in the cytoskeleton. Its subcellular location is the spindle. The protein resides in the chromosome. The protein localises to the centromere. It localises to the kinetochore. It is found in the microtubule organizing center. Its subcellular location is the centrosome. It carries out the reaction uridine in 28S rRNA + S-adenosyl-L-methionine = N(3)-methyluridine in 28S rRNA + S-adenosyl-L-homocysteine + H(+). Its function is as follows. S-adenosyl-L-methionine-dependent methyltransferase that specifically methylates the N3 position of a uridine in 28S rRNA. Required for association of the centrosomes with the poles of the bipolar mitotic spindle during metaphase. Also involved in chromosome alignment. May promote centrosome maturation probably by recruiting A-kinase anchor protein AKAP9 to centrosomes in early mitosis. Binds specifically to miRNA MIR145 hairpin, regulates MIR145 expression at a postranscriptional level. The chain is 28S rRNA (uridine-N(3))-methyltransferase from Homo sapiens (Human).